The following is a 484-amino-acid chain: Nuclear rim protein 1 (484 aa).

Ser-3 bears the Phosphoserine mark. 2 consecutive transmembrane segments (helical) span residues 145–165 and 252–272; these read FTIF…MFGY and TAIV…AIVF. The disordered stretch occupies residues 416-457; that stretch reads SSNENLEKGGAYLPNQDQNRPSKSLSPLRKTPLSARQKRFEG. At Ser-417 the chain carries Phosphoserine. Residues 430–440 show a composition bias toward polar residues; the sequence is NQDQNRPSKSL. A Phosphoserine modification is found at Ser-474.

This sequence belongs to the NUR1 family. Interacts with CSM1.

Its subcellular location is the nucleus membrane. Member of a perinuclear network that controls recombination at multiple loci to maintain genome stability. Required for rDNA repeat stability. This is Nuclear rim protein 1 (NUR1) from Saccharomyces cerevisiae (strain ATCC 204508 / S288c) (Baker's yeast).